A 3856-amino-acid chain; its full sequence is Serine/threonine-protein kinase ATM (3856 aa).

Residues 108-162 enclose the PWWP domain; the sequence is VGNLVWVMTKYKKWWPGEVVDFKADAKESFMVRSIGQSHLVSWFASSKLKPFKES. The disordered stretch occupies residues 648-681; it reads GIPDLNGTNTEPTLVLPQVEPTQRRRRRKKEESP. One can recognise an FAT domain in the interval 2727-3393; it reads VVAGSAVVCG…ILQLLALANG (667 aa). Positions 3233-3249 match the Bipartite nuclear localization signal motif; sequence RKHKTKELEVFIKRFKS. One can recognise a PI3K/PI4K catalytic domain in the interval 3499 to 3811; sequence LSDSVTVMNG…GNKDATRALM (313 aa). The G-loop stretch occupies residues 3505–3511; sequence VMNGINA. Residues 3678–3686 are catalytic loop; the sequence is GLGDRHAMN. Positions 3698–3722 are activation loop; the sequence is HIDLGVAFEQGLMLKTPERVPFRLT. The FATC domain maps to 3824–3856; that stretch reads EMRSIHGQAQQLIQDAIDTDRLSHMFPGWGAWM.

This sequence belongs to the PI3/PI4-kinase family. Interacts with RUG3. As to expression, ubiquitously expressed at low levels with slightly higher levels in flower buds.

Its subcellular location is the nucleus. It catalyses the reaction L-seryl-[protein] + ATP = O-phospho-L-seryl-[protein] + ADP + H(+). The catalysed reaction is L-threonyl-[protein] + ATP = O-phospho-L-threonyl-[protein] + ADP + H(+). Functionally, serine/threonine protein kinase which activates checkpoint signaling upon genotoxic stresses such as ionizing radiation (IR) or DNA replication stalling. Plays a central role in the perception and response to both stress-induced damage in somatic cells and developmentally programmed DNA damage during meiosis. Recognizes the substrate consensus sequence [ST]-Q. Phosphorylates histone variant H2AX to form H2AXS139ph at double strand breaks (DSBs), thereby regulating DNA damage response mechanism. Involved in transcriptional regulation of RAD51, PARP1, GR1, and LIG4 in response to DNA double strand breaks. Plays a dual role by activating the DNA damage response at dysfunctional telomeres and yet preventing this activation at functional telomeres. Not required for telomere length homeostasis. Regulates DNA damage response (DDR) synergistically with RUG3. Together with RUG3, involved in the splicing of the ND2/NAD2 mRNA. This Arabidopsis thaliana (Mouse-ear cress) protein is Serine/threonine-protein kinase ATM.